The chain runs to 273 residues: MLEHQTNTYQQNSTPALSAENLSIFYGDFKALKDISMRIPKNKVTAFIGPSGCGKSTLLRCFNRLNDLIDIFRLEGRILYHNQNIYDPDIDPVEIRRHIGMVFQKPNPFPKSIYDNIAYGVRVNGLAKSKEEMDEIVERSLRQAVLWDEVKDKLGQSGFALSGGQQQRLCIARAVAISPDVVLMDEPCASLDPISTVKVEELINELRQKYTIIIVTHNMQQATRIADLTAFFNAKAVESGQRFGYLVEFDKTNNIFQNPREKATQDYVSGRFG.

Positions 17–259 (LSAENLSIFY…DKTNNIFQNP (243 aa)) constitute an ABC transporter domain. 49–56 (GPSGCGKS) is an ATP binding site.

The protein belongs to the ABC transporter superfamily. Phosphate importer (TC 3.A.1.7) family. In terms of assembly, the complex is composed of two ATP-binding proteins (PstB), two transmembrane proteins (PstC and PstA) and a solute-binding protein (PstS).

The protein resides in the cell inner membrane. It catalyses the reaction phosphate(out) + ATP + H2O = ADP + 2 phosphate(in) + H(+). Functionally, part of the ABC transporter complex PstSACB involved in phosphate import. Responsible for energy coupling to the transport system. The sequence is that of Phosphate import ATP-binding protein PstB from Trichodesmium erythraeum (strain IMS101).